A 180-amino-acid polypeptide reads, in one-letter code: GTP cyclohydrolase 1 (180 aa).

Residues cysteine 71, histidine 74, and cysteine 142 each contribute to the Zn(2+) site.

It belongs to the GTP cyclohydrolase I family. Toroid-shaped homodecamer, composed of two pentamers of five dimers.

The catalysed reaction is GTP + H2O = 7,8-dihydroneopterin 3'-triphosphate + formate + H(+). The protein operates within cofactor biosynthesis; 7,8-dihydroneopterin triphosphate biosynthesis; 7,8-dihydroneopterin triphosphate from GTP: step 1/1. The protein is GTP cyclohydrolase 1 (folE) of Helicobacter pylori (strain J99 / ATCC 700824) (Campylobacter pylori J99).